A 367-amino-acid polypeptide reads, in one-letter code: Phosphoribosylaminoimidazole-succinocarboxamide synthase (367 aa).

Belongs to the SAICAR synthetase family.

The enzyme catalyses 5-amino-1-(5-phospho-D-ribosyl)imidazole-4-carboxylate + L-aspartate + ATP = (2S)-2-[5-amino-1-(5-phospho-beta-D-ribosyl)imidazole-4-carboxamido]succinate + ADP + phosphate + 2 H(+). Its pathway is purine metabolism; IMP biosynthesis via de novo pathway; 5-amino-1-(5-phospho-D-ribosyl)imidazole-4-carboxamide from 5-amino-1-(5-phospho-D-ribosyl)imidazole-4-carboxylate: step 1/2. The protein is Phosphoribosylaminoimidazole-succinocarboxamide synthase of Shewanella piezotolerans (strain WP3 / JCM 13877).